Consider the following 863-residue polypeptide: DNA mismatch repair protein MutS 2 (863 aa).

626–633 (GPNMSGKS) contributes to the ATP binding site.

The protein belongs to the DNA mismatch repair MutS family.

Its function is as follows. This protein is involved in the repair of mismatches in DNA. It is possible that it carries out the mismatch recognition step. This protein has a weak ATPase activity. The chain is DNA mismatch repair protein MutS 2 (mutS2) from Halobacterium salinarum (strain ATCC 700922 / JCM 11081 / NRC-1) (Halobacterium halobium).